The sequence spans 357 residues: Protein-arginine kinase (357 aa).

The 232-residue stretch at 24–255 folds into the Phosphagen kinase C-terminal domain; sequence IVISTRLRIA…RQIIEQERVA (232 aa). ATP-binding positions include 27–31, histidine 92, arginine 126, 177–181, and 208–213; these read STRLR, RASVM, and RGIYGE. Residues 338 to 343 carry the RDXXRA motif of the pArg binding pocket involved in allosteric regulation motif; sequence RDERRA.

This sequence belongs to the ATP:guanido phosphotransferase family.

It carries out the reaction L-arginyl-[protein] + ATP = N(omega)-phospho-L-arginyl-[protein] + ADP + H(+). With respect to regulation, appears to be allosterically activated by the binding of pArg-containing polypeptides to the pArg-binding pocket localized in the C-terminal domain of McsB. In terms of biological role, catalyzes the specific phosphorylation of arginine residues in proteins. In Brevibacillus brevis (strain 47 / JCM 6285 / NBRC 100599), this protein is Protein-arginine kinase.